The following is a 291-amino-acid chain: Protease HtpX (291 aa).

2 helical membrane passes run 4–24 (IALFLATNLAVMIVFSIVLNI) and 36–56 (LSGLLVMAVLFGFGGSLISLM). His143 contributes to the Zn(2+) binding site. Glu144 is an active-site residue. His147 is a Zn(2+) binding site. The next 2 helical transmembrane spans lie at 151 to 171 (GDMITMTLMQGVVNTFVIFLS) and 199 to 219 (FIVSTILELAFGFLASFLTMW). Glu225 is a Zn(2+) binding site.

It belongs to the peptidase M48B family. It depends on Zn(2+) as a cofactor.

Its subcellular location is the cell inner membrane. This is Protease HtpX from Aliivibrio fischeri (strain MJ11) (Vibrio fischeri).